Consider the following 338-residue polypeptide: P2Y purinoceptor 14 (338 aa).

The Extracellular portion of the chain corresponds to 1 to 29; that stretch reads MNNSTTTDPPNQPCSWNTLITKQIIPVLY. N-linked (GlcNAc...) asparagine glycans are attached at residues asparagine 2 and asparagine 3. A helical transmembrane segment spans residues 30–50; sequence GMVFITGLLLNGISGWIFFYV. Residues 51 to 55 lie on the Cytoplasmic side of the membrane; sequence PSSKS. Residues 56-76 form a helical membrane-spanning segment; the sequence is FIIYLKNIVVADFLMGLTFPF. Topologically, residues 77–96 are extracellular; it reads KVLGDSGLGPWQVNVFVCRV. Cysteine 94 and cysteine 172 are oxidised to a cystine. The chain crosses the membrane as a helical span at residues 97–117; the sequence is SAVIFYVNMYVSIVFFGLISF. Residues 118–139 are Cytoplasmic-facing; it reads DRYYKIVKPLLTSIVQSVNYSK. The chain crosses the membrane as a helical span at residues 140–160; it reads LLSVLVWMLMLLLAVPNIILT. The Extracellular portion of the chain corresponds to 161-188; that stretch reads NQGVKEVTKIQCMELKNELGRKWHKASN. Residues 189–209 traverse the membrane as a helical segment; sequence YIFVSIFWVVFLLLIVFYTAI. The Cytoplasmic segment spans residues 210-234; the sequence is TRKIFKSHLKSRKNSTSVKRKSSRN. A helical membrane pass occupies residues 235–255; it reads IFSIVLVFVVCFVPYHIARIP. Residues 256–278 are Extracellular-facing; the sequence is YTKSQTEGHYSCRTKETLLYAKE. The chain crosses the membrane as a helical span at residues 279 to 299; it reads FTLLLSAANVCLDPIIYFFLC. The Cytoplasmic portion of the chain corresponds to 300-338; that stretch reads QPFREVLNKKLHMSLKVQNDLEVSKTKRENAIHESTDTL.

It belongs to the G-protein coupled receptor 1 family.

The protein resides in the cell membrane. Receptor for UDP-glucose coupled to G-proteins. The protein is P2Y purinoceptor 14 (P2ry14) of Mus musculus (Mouse).